A 42-amino-acid polypeptide reads, in one-letter code: Photosystem I reaction center subunit IX (42 aa).

Residues 7–27 form a helical membrane-spanning segment; it reads YLSTAPVIATIWFGFLAGLLI.

The protein belongs to the PsaJ family.

The protein resides in the plastid. Its subcellular location is the chloroplast thylakoid membrane. Functionally, may help in the organization of the PsaE and PsaF subunits. In Chaetosphaeridium globosum (Charophycean green alga), this protein is Photosystem I reaction center subunit IX.